We begin with the raw amino-acid sequence, 242 residues long: ATP synthase subunit a (242 aa).

The next 6 membrane-spanning stretches (helical) occupy residues serine 29 to tyrosine 49, phenylalanine 84 to threonine 104, isoleucine 114 to valine 134, phenylalanine 140 to isoleucine 160, methionine 181 to leucine 201, and phenylalanine 203 to glutamine 223.

The protein belongs to the ATPase A chain family. F-type ATPases have 2 components, CF(1) - the catalytic core - and CF(0) - the membrane proton channel. CF(1) has five subunits: alpha(3), beta(3), gamma(1), delta(1), epsilon(1). CF(0) has three main subunits: a(1), b(2) and c(9-12). The alpha and beta chains form an alternating ring which encloses part of the gamma chain. CF(1) is attached to CF(0) by a central stalk formed by the gamma and epsilon chains, while a peripheral stalk is formed by the delta and b chains.

It is found in the cell inner membrane. Functionally, key component of the proton channel; it plays a direct role in the translocation of protons across the membrane. This is ATP synthase subunit a from Rickettsia peacockii (strain Rustic).